We begin with the raw amino-acid sequence, 322 residues long: Tyrosine recombinase XerC (322 aa).

Residues Met-1–Asp-25 form a disordered region. A compositionally biased stretch (low complexity) spans Pro-16 to Asp-25. In terms of domain architecture, Core-binding (CB) spans Asp-25–Leu-111. Residues Lys-132–Asp-309 enclose the Tyr recombinase domain. Residues Arg-171, Lys-195, His-261, Arg-264, and His-287 contribute to the active site. Tyr-296 acts as the O-(3'-phospho-DNA)-tyrosine intermediate in catalysis.

This sequence belongs to the 'phage' integrase family. XerC subfamily. Forms a cyclic heterotetrameric complex composed of two molecules of XerC and two molecules of XerD.

The protein localises to the cytoplasm. Functionally, site-specific tyrosine recombinase, which acts by catalyzing the cutting and rejoining of the recombining DNA molecules. The XerC-XerD complex is essential to convert dimers of the bacterial chromosome into monomers to permit their segregation at cell division. It also contributes to the segregational stability of plasmids. The polypeptide is Tyrosine recombinase XerC (Xanthomonas campestris pv. campestris (strain 8004)).